The primary structure comprises 428 residues: PGL/p-HBAD biosynthesis glycosyltransferase MRA_2985 (428 aa).

The disordered stretch occupies residues 1-23; the sequence is MEETSVAGDPGPDAGTSTAPNAA.

It belongs to the UDP-glycosyltransferase family.

Its function is as follows. Involved in glycosylation steps downstream of mono-O-methyl-glycosyl-p-hydroxybenzoic acid derivative (p-HBAD I) and 2-O-methyl-rhamnosyl-phenolphthiocerol dimycocerosate (mycoside B) during the p-hydroxybenzoic acid derivatives (p-HBAD) and glycosylated phenolphthiocerol dimycocerosates (PGL) biosynthesis. The polypeptide is PGL/p-HBAD biosynthesis glycosyltransferase MRA_2985 (Mycobacterium tuberculosis (strain ATCC 25177 / H37Ra)).